The chain runs to 34 residues: Cycloamanide B proprotein (34 aa).

The propeptide occupies 1–10 (MSDINAARLP). The cyclopeptide (Ser-Pro) cross-link spans 11-17 (SFFFPIP). The propeptide occupies 18 to 34 (CISDDIEMVLTRGESLC).

It belongs to the MSDIN fungal toxin family. In terms of processing, processed by the macrocyclase-peptidase enzyme POPB to yield a cyclic decapeptide. POPB first removes 10 residues from the N-terminus. Conformational trapping of the remaining peptide forces the enzyme to release this intermediate rather than proceed to macrocyclization. The enzyme rebinds the remaining peptide in a different conformation and catalyzes macrocyclization of the N-terminal 7 residues.

Its function is as follows. Cyclic heptapeptide that belongs to the MSDIN-like toxin family responsible for a large number of food poisoning cases and deaths. Cycloaminide B is non-toxic to mammals but shows immunosuppressive activity, probably through the inhibition of the action of interleukin-1 and interleukin-2. The polypeptide is Cycloamanide B proprotein (Amanita phalloides (Death cap)).